Reading from the N-terminus, the 546-residue chain is Phosphoglucomutase (546 aa).

The active-site Phosphoserine intermediate is serine 135. Mg(2+) contacts are provided by serine 135, aspartate 288, aspartate 290, and aspartate 292.

The protein belongs to the phosphohexose mutase family. The cofactor is Mg(2+).

It carries out the reaction alpha-D-glucose 1-phosphate = alpha-D-glucose 6-phosphate. The protein operates within glycolipid metabolism; diglucosyl-diacylglycerol biosynthesis. Its function is as follows. Catalyzes the interconversion between glucose-6-phosphate and alpha-glucose-1-phosphate. This is the first step in the biosynthesis of diglucosyl-diacylglycerol (Glc2-DAG), i.e. a glycolipid found in the membrane, which is also used as a membrane anchor for lipoteichoic acid (LTA). The polypeptide is Phosphoglucomutase (pgcA) (Staphylococcus epidermidis (strain ATCC 35984 / DSM 28319 / BCRC 17069 / CCUG 31568 / BM 3577 / RP62A)).